The chain runs to 282 residues: Elongation factor Ts (282 aa).

An involved in Mg(2+) ion dislocation from EF-Tu region spans residues 80-83 (TDFV).

The protein belongs to the EF-Ts family.

It is found in the cytoplasm. Functionally, associates with the EF-Tu.GDP complex and induces the exchange of GDP to GTP. It remains bound to the aminoacyl-tRNA.EF-Tu.GTP complex up to the GTP hydrolysis stage on the ribosome. The polypeptide is Elongation factor Ts (Chlamydia trachomatis serovar L2b (strain UCH-1/proctitis)).